A 108-amino-acid polypeptide reads, in one-letter code: Small ribosomal subunit protein mS33 (108 aa).

Residues 84–108 form a disordered region; it reads LRARDKGAPKKKRTAPSAADAKKKK.

The protein belongs to the mitochondrion-specific ribosomal protein mS33 family. Component of the mitochondrial small ribosomal subunit (mt-SSU). Mature N.crassa 74S mitochondrial ribosomes consist of a small (37S) and a large (54S) subunit. The 37S small subunit contains a 16S ribosomal RNA (16S mt-rRNA) and 32 different proteins. The 54S large subunit contains a 23S rRNA (23S mt-rRNA) and 42 different proteins.

The protein resides in the mitochondrion. Functionally, component of the mitochondrial ribosome (mitoribosome), a dedicated translation machinery responsible for the synthesis of mitochondrial genome-encoded proteins, including at least some of the essential transmembrane subunits of the mitochondrial respiratory chain. The mitoribosomes are attached to the mitochondrial inner membrane and translation products are cotranslationally integrated into the membrane. The chain is Small ribosomal subunit protein mS33 (rsm27) from Neurospora crassa (strain ATCC 24698 / 74-OR23-1A / CBS 708.71 / DSM 1257 / FGSC 987).